The chain runs to 356 residues: uncharacterized protein (356 aa).

Transmembrane regions (helical) follow at residues 2–22 (FEAIIYNISVMVAGIYLFHRL), 35–55 (EYVTVLMTFVSLLLAAYPIPF), 76–96 (NMIYTLTAAFIVSLVDVFIFG), 99–119 (IIYGITLIVIAGIVSAVGPFL), 124–144 (IISLLILNLISIIILLFLALL), and 151–171 (VEILVLIPISFIITIASAITF). The region spanning 218 to 353 (QSLALLLIDI…GRNKVMFNPI (136 aa)) is the GGDEF domain.

The protein localises to the cell membrane. This is an uncharacterized protein from Staphylococcus epidermidis (strain ATCC 35984 / DSM 28319 / BCRC 17069 / CCUG 31568 / BM 3577 / RP62A).